Here is a 408-residue protein sequence, read N- to C-terminus: MMCSRVPSEQSSGTSLLPKDGAPFSWDSLDEDGLDDSLLELSEGEEDDGDVNYTEEEIDALLKEDDPSYEQSSGEDDGGHVEKGERGSQILLDTPREKNSSYSLGPVAETPDLFKLPQLSTSSGHGPAHTKPLNRRSVLEKNLIKVTVAPFNPTVCDALLDKDETDSSKDTEKLSSLGEEMREDGLSPNESKLCTESEGISPNNSAWNGPQLSSSNNNFQQTVSDKNMPDSENPTSVFSRISDHSETPNMELSCRNGGSHKSSCEMRSLVVSTSSNKQDVLNKDSGKMKGHERRLGKVIPVLQTKTRTNVPTFSQSNLEQQKQLYLRSVIAHIEDPEDTNQGISGELCALMDQVHHMQHSKWQHPSDLTTRNYARRQKHLQRYSLTQWVDRNMRSHHRFQRLPDFSYS.

Disordered stretches follow at residues 1-111 (MMCS…AETP), 162-234 (KDET…SENP), and 271-291 (VSTS…MKGH). Residues 28-59 (SLDEDGLDDSLLELSEGEEDDGDVNYTEEEID) show a composition bias toward acidic residues. Composition is skewed to basic and acidic residues over residues 77-86 (DGGHVEKGER) and 162-185 (KDET…REDG). Position 187 is a phosphoserine (Ser-187). Polar residues predominate over residues 188–234 (PNESKLCTESEGISPNNSAWNGPQLSSSNNNFQQTVSDKNMPDSENP). Residues 280 to 291 (VLNKDSGKMKGH) are compositionally biased toward basic and acidic residues.

Interacts with S100P. In terms of tissue distribution, expressed in brain, spleen, and lung. Not detected in pancreas or liver. In pancreas, expressed predominantly in islet cells and to a lesser extent in acinar cells, but not expressed in ductal cells. Up-regulated in various pancreatic ductal adenocarcinomas and pancreatic intraepithelial neoplasias. Detected in pancreatic ductal adenocarcinoma cells (at protein level). Not detected in non-neoplastic ductal epithelium (at protein level).

The protein resides in the nucleus. This is S100P-binding protein from Homo sapiens (Human).